Reading from the N-terminus, the 343-residue chain is Methionine import ATP-binding protein MetN (343 aa).

The ABC transporter domain occupies 2–241; sequence IKLFHINKIF…PKTPIAQAFI (240 aa). Position 38-45 (38-45) interacts with ATP; the sequence is GSSGAGKS.

It belongs to the ABC transporter superfamily. Methionine importer (TC 3.A.1.24) family. The complex is composed of two ATP-binding proteins (MetN), two transmembrane proteins (MetI) and a solute-binding protein (MetQ).

The protein localises to the cell inner membrane. The catalysed reaction is L-methionine(out) + ATP + H2O = L-methionine(in) + ADP + phosphate + H(+). It carries out the reaction D-methionine(out) + ATP + H2O = D-methionine(in) + ADP + phosphate + H(+). Functionally, part of the ABC transporter complex MetNIQ involved in methionine import. Responsible for energy coupling to the transport system. This chain is Methionine import ATP-binding protein MetN, found in Photorhabdus laumondii subsp. laumondii (strain DSM 15139 / CIP 105565 / TT01) (Photorhabdus luminescens subsp. laumondii).